The following is a 425-amino-acid chain: MNQQWTQYIQIIKQVVKPALGCTEPIAAAYAAAVARKELGTSDIDAIEVRVSDNLFKNSMGVFVPGTGKIGLKIAASVGALAGDPTAELEVLARINEQDVAAAQQLIDEERVTVARMDTQEFIYCSVTLTSGDDVVSVTISGGHTNIIQIMRNGDVIFDAPPQQRVATASVCEGVDISIKQIYEFATQAPFEEIKFILQAAELNTLLAQEGIDRGYGLEIGRTLKGNIEQGLLGNDLMSRIQMMTSAASDARMGGATLPAMSNFGSGNQGIAATMPVVVAAEVFQNDEEQLARALIMSHLGAIYIKSYYPPLSAFCGNTVTSAAASMALVYLAGGTFEQSCYAIQNVISDSSGMVCDGAKSSCAMKVCTSSTTAVRSYLMAMGNHSVKNQGIVGEEVEQTIRNVGSMVRFGMPYTDKSIIDIMSA.

The protein belongs to the UPF0597 family.

In Vibrio parahaemolyticus serotype O3:K6 (strain RIMD 2210633), this protein is UPF0597 protein VP2173.